A 303-amino-acid polypeptide reads, in one-letter code: Bifunctional protein FolD (303 aa).

NADP(+) contacts are provided by residues 169 to 171, threonine 196, and valine 237; that span reads GRG.

It belongs to the tetrahydrofolate dehydrogenase/cyclohydrolase family. In terms of assembly, homodimer.

It carries out the reaction (6R)-5,10-methylene-5,6,7,8-tetrahydrofolate + NADP(+) = (6R)-5,10-methenyltetrahydrofolate + NADPH. The enzyme catalyses (6R)-5,10-methenyltetrahydrofolate + H2O = (6R)-10-formyltetrahydrofolate + H(+). It functions in the pathway one-carbon metabolism; tetrahydrofolate interconversion. Functionally, catalyzes the oxidation of 5,10-methylenetetrahydrofolate to 5,10-methenyltetrahydrofolate and then the hydrolysis of 5,10-methenyltetrahydrofolate to 10-formyltetrahydrofolate. The sequence is that of Bifunctional protein FolD from Micrococcus luteus (strain ATCC 4698 / DSM 20030 / JCM 1464 / CCM 169 / CCUG 5858 / IAM 1056 / NBRC 3333 / NCIMB 9278 / NCTC 2665 / VKM Ac-2230) (Micrococcus lysodeikticus).